Consider the following 696-residue polypeptide: C2 domain-containing protein 2 (696 aa).

A helical transmembrane segment spans residues 8 to 28 (VQWLFLVSLFVAALGTVGLYL). The region spanning 45–238 (EPDELRRRES…PTQVKEAQSL (194 aa)) is the SMP-LBD domain. A Phosphoserine modification is found at serine 54. The region spanning 241–357 (PSSTAQEPCP…RKQPNGPQTF (117 aa)) is the C2 domain. Position 436 is a phosphoserine (serine 436). Threonine 440 bears the Phosphothreonine mark. Residues 551–611 (ATEASATTPP…DGDELSESSL (61 aa)) form a disordered region. The segment covering 573-588 (KPRENDLDSWELEKES) has biased composition (basic and acidic residues). Serine 581 carries the post-translational modification Phosphoserine.

It localises to the membrane. The chain is C2 domain-containing protein 2 from Mus musculus (Mouse).